We begin with the raw amino-acid sequence, 514 residues long: ATP synthase subunit alpha (514 aa).

Residue 170 to 177 participates in ATP binding; that stretch reads GDRQIGKT.

It belongs to the ATPase alpha/beta chains family. As to quaternary structure, F-type ATPases have 2 components, CF(1) - the catalytic core - and CF(0) - the membrane proton channel. CF(1) has five subunits: alpha(3), beta(3), gamma(1), delta(1), epsilon(1). CF(0) has three main subunits: a(1), b(2) and c(9-12). The alpha and beta chains form an alternating ring which encloses part of the gamma chain. CF(1) is attached to CF(0) by a central stalk formed by the gamma and epsilon chains, while a peripheral stalk is formed by the delta and b chains.

Its subcellular location is the cell inner membrane. The enzyme catalyses ATP + H2O + 4 H(+)(in) = ADP + phosphate + 5 H(+)(out). Functionally, produces ATP from ADP in the presence of a proton gradient across the membrane. The alpha chain is a regulatory subunit. The chain is ATP synthase subunit alpha from Pseudomonas fluorescens (strain ATCC BAA-477 / NRRL B-23932 / Pf-5).